A 587-amino-acid chain; its full sequence is Prolycopene isomerase 1, chloroplastic (587 aa).

Residues 1–13 (MLCLSLNSSSTSP) are compositionally biased toward low complexity. A disordered region spans residues 1 to 21 (MLCLSLNSSSTSPPKSPLHHS). The transit peptide at 1–50 (MLCLSLNSSSTSPPKSPLHHSFSRRSMRSWVCSPRVQRKKLGFWSSPKAV) directs the protein to the chloroplast.

It belongs to the carotenoid/retinoid oxidoreductase family. CrtISO subfamily. NAD(+) is required as a cofactor. Requires NADP(+) as cofactor. FAD serves as cofactor. As to expression, up-regulated in the flower buds and flower lip tissue, while it is weakly expressed in leaves.

It is found in the plastid. It localises to the chloroplast membrane. The catalysed reaction is 7,7',9,9'-tetra-cis-lycopene = all-trans-lycopene. The protein operates within carotenoid biosynthesis; lycopene biosynthesis. Functionally, carotene cis-trans-isomerase that converts 7,9,9'-tri-cis-neurosporene to 9'-cis-neurosporene and 7,9,9',7'-tetra-cis-lycopene (also known as prolycopene) into all-trans-lycopene. Isomerization requires redox-active components, suggesting that isomerization is achieved by a reversible redox reaction acting at specific double bonds. Isomerizes adjacent cis-double bonds at C7 and C9 pairwise into the trans-configuration, but is incapable of isomerizing single cis-double bonds at C9 and C9'. The polypeptide is Prolycopene isomerase 1, chloroplastic (CRTISO1) (Oncidium hybrid cultivar (Orchid)).